Consider the following 121-residue polypeptide: Large ribosomal subunit protein bL12 (121 aa).

The protein belongs to the bacterial ribosomal protein bL12 family. In terms of assembly, homodimer. Part of the ribosomal stalk of the 50S ribosomal subunit. Forms a multimeric L10(L12)X complex, where L10 forms an elongated spine to which 2 to 4 L12 dimers bind in a sequential fashion. Binds GTP-bound translation factors.

Its function is as follows. Forms part of the ribosomal stalk which helps the ribosome interact with GTP-bound translation factors. Is thus essential for accurate translation. This Shewanella baltica (strain OS185) protein is Large ribosomal subunit protein bL12.